The following is a 380-amino-acid chain: Succinate--CoA ligase [ADP-forming] subunit beta (380 aa).

In terms of domain architecture, ATP-grasp spans 9–237; sequence RDLLARFGIP…PSAEPEAERR (229 aa). ATP is bound by residues Lys45, 52–54, Val94, and Glu99; that span reads GRG. Residues Asn192 and Asp206 each coordinate Mg(2+). Substrate-binding positions include Asn257 and 314-316; that span reads GIT.

Belongs to the succinate/malate CoA ligase beta subunit family. As to quaternary structure, heterotetramer of two alpha and two beta subunits. Requires Mg(2+) as cofactor.

The enzyme catalyses succinate + ATP + CoA = succinyl-CoA + ADP + phosphate. The catalysed reaction is GTP + succinate + CoA = succinyl-CoA + GDP + phosphate. Its pathway is carbohydrate metabolism; tricarboxylic acid cycle; succinate from succinyl-CoA (ligase route): step 1/1. Functionally, succinyl-CoA synthetase functions in the citric acid cycle (TCA), coupling the hydrolysis of succinyl-CoA to the synthesis of either ATP or GTP and thus represents the only step of substrate-level phosphorylation in the TCA. The beta subunit provides nucleotide specificity of the enzyme and binds the substrate succinate, while the binding sites for coenzyme A and phosphate are found in the alpha subunit. This is Succinate--CoA ligase [ADP-forming] subunit beta from Chloroflexus aurantiacus (strain ATCC 29366 / DSM 635 / J-10-fl).